Here is a 367-residue protein sequence, read N- to C-terminus: UDP-N-acetylglucosamine--N-acetylmuramyl-(pentapeptide) pyrophosphoryl-undecaprenol N-acetylglucosamine transferase (367 aa).

Residues 13-15 (TGG), N127, R168, S200, I251, and Q296 contribute to the UDP-N-acetyl-alpha-D-glucosamine site.

The protein belongs to the glycosyltransferase 28 family. MurG subfamily.

It is found in the cell inner membrane. It carries out the reaction di-trans,octa-cis-undecaprenyl diphospho-N-acetyl-alpha-D-muramoyl-L-alanyl-D-glutamyl-meso-2,6-diaminopimeloyl-D-alanyl-D-alanine + UDP-N-acetyl-alpha-D-glucosamine = di-trans,octa-cis-undecaprenyl diphospho-[N-acetyl-alpha-D-glucosaminyl-(1-&gt;4)]-N-acetyl-alpha-D-muramoyl-L-alanyl-D-glutamyl-meso-2,6-diaminopimeloyl-D-alanyl-D-alanine + UDP + H(+). The protein operates within cell wall biogenesis; peptidoglycan biosynthesis. In terms of biological role, cell wall formation. Catalyzes the transfer of a GlcNAc subunit on undecaprenyl-pyrophosphoryl-MurNAc-pentapeptide (lipid intermediate I) to form undecaprenyl-pyrophosphoryl-MurNAc-(pentapeptide)GlcNAc (lipid intermediate II). The chain is UDP-N-acetylglucosamine--N-acetylmuramyl-(pentapeptide) pyrophosphoryl-undecaprenol N-acetylglucosamine transferase from Flavobacterium psychrophilum (strain ATCC 49511 / DSM 21280 / CIP 103535 / JIP02/86).